Reading from the N-terminus, the 172-residue chain is Adenine phosphoribosyltransferase (172 aa).

It belongs to the purine/pyrimidine phosphoribosyltransferase family. Homodimer.

Its subcellular location is the cytoplasm. The enzyme catalyses AMP + diphosphate = 5-phospho-alpha-D-ribose 1-diphosphate + adenine. Its pathway is purine metabolism; AMP biosynthesis via salvage pathway; AMP from adenine: step 1/1. Its function is as follows. Catalyzes a salvage reaction resulting in the formation of AMP, that is energically less costly than de novo synthesis. In Streptococcus mutans serotype c (strain ATCC 700610 / UA159), this protein is Adenine phosphoribosyltransferase.